The following is a 306-amino-acid chain: Probable GTP 3',8-cyclase (306 aa).

Residues 5–232 (RFGRPVTNLR…RRRKYFLPVD (228 aa)) form the Radical SAM core domain. Arg14 lines the GTP pocket. Residues Cys21 and Cys25 each coordinate [4Fe-4S] cluster. Residue Tyr27 coordinates S-adenosyl-L-methionine. Residue Cys28 coordinates [4Fe-4S] cluster. GTP is bound at residue Lys61. Gly65 is a binding site for S-adenosyl-L-methionine. Thr90 contributes to the GTP binding site. Ser114 provides a ligand contact to S-adenosyl-L-methionine. Lys150 contacts GTP. Position 189 (Met189) interacts with S-adenosyl-L-methionine. Residues Cys250 and Cys253 each contribute to the [4Fe-4S] cluster site. 255-257 (RLR) contributes to the GTP binding site. Cys267 contacts [4Fe-4S] cluster.

This sequence belongs to the radical SAM superfamily. MoaA family. It depends on [4Fe-4S] cluster as a cofactor.

The enzyme catalyses GTP + AH2 + S-adenosyl-L-methionine = (8S)-3',8-cyclo-7,8-dihydroguanosine 5'-triphosphate + 5'-deoxyadenosine + L-methionine + A + H(+). Its pathway is cofactor biosynthesis; molybdopterin biosynthesis. In terms of biological role, catalyzes the cyclization of GTP to (8S)-3',8-cyclo-7,8-dihydroguanosine 5'-triphosphate. The chain is Probable GTP 3',8-cyclase from Pyrococcus abyssi (strain GE5 / Orsay).